The following is a 237-amino-acid chain: Sugar fermentation stimulation protein homolog (237 aa).

Belongs to the SfsA family.

This chain is Sugar fermentation stimulation protein homolog, found in Pseudomonas syringae pv. tomato (strain ATCC BAA-871 / DC3000).